Reading from the N-terminus, the 53-residue chain is UPF0391 membrane protein PA5482 (53 aa).

Helical transmembrane passes span 4 to 24 (WAITFLIIAIIAAVLGFGGIA) and 29 to 49 (GIAKILFVLFLVLFVVSFFFG).

This sequence belongs to the UPF0391 family.

The protein resides in the cell membrane. The protein is UPF0391 membrane protein PA5482 of Pseudomonas aeruginosa (strain ATCC 15692 / DSM 22644 / CIP 104116 / JCM 14847 / LMG 12228 / 1C / PRS 101 / PAO1).